Here is a 204-residue protein sequence, read N- to C-terminus: Phosphoribosyl-dephospho-CoA transferase (204 aa).

Catalysis depends on residues aspartate 129 and aspartate 131.

The protein belongs to the MdcG family.

It catalyses the reaction apo-[malonate decarboxylase ACP] + 2'-(5''-triphospho-alpha-D-ribosyl)-3'-dephospho-CoA = holo-[malonate decarboxylase ACP] + diphosphate. Its function is as follows. Transfers 2'-(5-triphosphoribosyl)-3'-dephosphocoenzyme-A to the apo-[acyl-carrier-protein] of the malonate decarboxylase to yield holo-[acyl-carrier-protein]. In Pseudomonas putida (strain W619), this protein is Phosphoribosyl-dephospho-CoA transferase.